Consider the following 285-residue polypeptide: Release factor glutamine methyltransferase (285 aa).

S-adenosyl-L-methionine contacts are provided by residues 119 to 123 (GTGSG), Glu-142, Trp-175, and Asn-191. 191 to 194 (NPPY) is a substrate binding site.

The protein belongs to the protein N5-glutamine methyltransferase family. PrmC subfamily.

It carries out the reaction L-glutaminyl-[peptide chain release factor] + S-adenosyl-L-methionine = N(5)-methyl-L-glutaminyl-[peptide chain release factor] + S-adenosyl-L-homocysteine + H(+). Its function is as follows. Methylates the class 1 translation termination release factors RF1/PrfA and RF2/PrfB on the glutamine residue of the universally conserved GGQ motif. In Burkholderia pseudomallei (strain K96243), this protein is Release factor glutamine methyltransferase.